We begin with the raw amino-acid sequence, 1997 residues long: Protein MOR1 (1997 aa).

HEAT repeat units follow at residues 48 to 86 and 164 to 202; these read DARL…AADA and VVPP…WIGK. Residues 236 to 264 form a disordered region; that stretch reads RKIRSEQEKELEEEVVPEAAGTNNSEEAV. HEAT repeat units follow at residues 321 to 359, 362 to 400, and 441 to 479; these read PGDF…GLRT, SGNS…SGCI, and LKLH…MVGM. The disordered stretch occupies residues 501-576; that stretch reads IGSASDTTSG…DGGPQSKASA (76 aa). Over residues 504–520 the composition is skewed to polar residues; it reads ASDTTSGTVAASNTGVG. A compositionally biased stretch (low complexity) spans 529–539; that stretch reads SSSMRRSAASM. 4 HEAT repeats span residues 848–886, 890–928, 931–969, and 1007–1045; these read EDIS…EAHK, PTGT…AMGP, EKSS…AAQL, and PSEA…ICGQ. Residues 1087–1115 form a disordered region; sequence MSLPSKAGSKNNKHGPNDRGSNVSKAVSQ. HEAT repeat units follow at residues 1233 to 1259, 1260 to 1294, 1295 to 1332, and 1334 to 1372; these read TTCL…MLTE, AEAA…MVNI, YSLP…HHGT, and VSGL…NLGD. The span at 1400–1410 shows a compositional bias: basic and acidic residues; it reads MDKRREGRPGD. The disordered stretch occupies residues 1400–1436; sequence MDKRREGRPGDARAALRRSVRENGSDIAEQSGEAVSR. An HEAT 14 repeat occupies 1539–1579; it reads RSCKYVLNTLMQTFQIKRLAHAVKEGTLDNLITELLLWLLD. The interval 1755-1776 is disordered; sequence MGQTHWGDAGSNNPNPSTHSTD. Residues 1764 to 1776 are compositionally biased toward polar residues; sequence GSNNPNPSTHSTD.

Belongs to the TOG/XMAP215 family.

The protein resides in the cytoplasm. It is found in the cytoskeleton. Its function is as follows. Microtubule-associated protein that is essential for cortical microtubules organization and function. The protein is Protein MOR1 (MOR1) of Oryza sativa subsp. japonica (Rice).